A 515-amino-acid chain; its full sequence is Organic cation/carnitine transporter 5 (515 aa).

Residues 1 to 43 (MADSLAPLLPTHIEEDEDTSSPLTFDKILEKSLSDFGFSQFLQ) lie on the Cytoplasmic side of the membrane. Residues 44 to 64 (IVLVGLALTFDSQQIFITVFT) traverse the membrane as a helical segment. Over 65 to 124 (DAYPTWHCLDHTICNPATTDICKIPRSAWDWDGGFKGKSVISEFDLECSSSFLRSLPSST) the chain is Extracellular. The helical transmembrane segment at 125 to 145 (FYVGSIVGGVVLAMIPDGSLG) threads the bilayer. Residues 146–149 (RKQL) lie on the Cytoplasmic side of the membrane. Residues 150-172 (LFFSSFAMSLTGISIFLSSNIWI) traverse the membrane as a helical segment. At 173-177 (YSFLK) the chain is on the extracellular side. A helical membrane pass occupies residues 178-195 (FVIGFARSQTGTYALVLI). 195-202 (ISERISTK) provides a ligand contact to ATP. Over 196–208 (SERISTKWRPRAT) the chain is Cytoplasmic. The chain crosses the membrane as a helical span at residues 209 to 229 (MVPFTLFVLGFMSLSGIAYLV). At 230 to 235 (RHASWK) the chain is on the extracellular side. The helical transmembrane segment at 236-256 (VLYLCTSIPAGIHSIFIYFFA) threads the bilayer. The Cytoplasmic portion of the chain corresponds to 257–320 (LESPRWLHLE…LFIIKWAFRR (64 aa)). The helical transmembrane segment at 321–341 (VTLVMIIMFGLGMSYYGVPLA) threads the bilayer. Topologically, residues 342-350 (VRDIKVNIY) are extracellular. The chain crosses the membrane as a helical span at residues 351–371 (MSEALNAMVELPTFVVTPILL). At 372–379 (EQFSRRSS) the chain is on the cytoplasmic side. The helical transmembrane segment at 380 to 400 (VLVNCLIGGASGVLCFVMSLY) threads the bilayer. Residues 401–411 (GRTKIAFALEL) lie on the Extracellular side of the membrane. Residues 412-432 (GSFFCARIGFNLMAIYLVELF) form a helical membrane-spanning segment. Over 433 to 441 (PTCVRNSAT) the chain is Cytoplasmic. The helical transmembrane segment at 442-462 (MMLRQALVVGGACCPLIASLG) threads the bilayer. Topologically, residues 463-467 (RNVPS) are extracellular. A helical transmembrane segment spans residues 468–488 (LSFAVFGFAMSGLGLFALLLP). Topologically, residues 489–515 (ETKGLSLCDTMEEQEQRDQALKTSHSC) are cytoplasmic.

This sequence belongs to the major facilitator (TC 2.A.1) superfamily. Organic cation transporter (TC 2.A.1.19) family. In terms of tissue distribution, mostly expressed in leaves and siliques, and, to a lower extent, in roots, stems and flowers.

It is found in the vacuole membrane. High affinity carnitine transporter involved in the active cellular uptake of carnitine. Also transports organic cations. This Arabidopsis thaliana (Mouse-ear cress) protein is Organic cation/carnitine transporter 5 (OCT5).